A 152-amino-acid polypeptide reads, in one-letter code: Ribonuclease HI (152 aa).

In terms of domain architecture, RNase H type-1 spans 1–142 (MDSKVVIYTD…ADKLAVQGRE (142 aa)). Residues Asp10, Glu48, Asp70, and Asp134 each contribute to the Mg(2+) site.

It belongs to the RNase H family. In terms of assembly, monomer. Mg(2+) is required as a cofactor.

The protein localises to the cytoplasm. The enzyme catalyses Endonucleolytic cleavage to 5'-phosphomonoester.. Functionally, endonuclease that specifically degrades the RNA of RNA-DNA hybrids. This is Ribonuclease HI from Rickettsia conorii (strain ATCC VR-613 / Malish 7).